We begin with the raw amino-acid sequence, 98 residues long: NADH-ubiquinone oxidoreductase chain 4L (98 aa).

3 helical membrane-spanning segments follow: residues 1–21, 29–49, and 59–79; these read MLSINLNLIVAFLLALMGVLI, TLLCLEGMMLSLFILMTLLIT, and TPLILLVFSACEAAIGLALLV.

It belongs to the complex I subunit 4L family. Core subunit of respiratory chain NADH dehydrogenase (Complex I) which is composed of 45 different subunits.

Its subcellular location is the mitochondrion inner membrane. The enzyme catalyses a ubiquinone + NADH + 5 H(+)(in) = a ubiquinol + NAD(+) + 4 H(+)(out). Core subunit of the mitochondrial membrane respiratory chain NADH dehydrogenase (Complex I) which catalyzes electron transfer from NADH through the respiratory chain, using ubiquinone as an electron acceptor. Part of the enzyme membrane arm which is embedded in the lipid bilayer and involved in proton translocation. This chain is NADH-ubiquinone oxidoreductase chain 4L (MT-ND4L), found in Sminthopsis crassicaudata (Fat-tailed dunnart).